A 469-amino-acid chain; its full sequence is Phenylalanine--tRNA ligase alpha subunit (469 aa).

L-phenylalanine-binding positions include Thr309, 348-350 (QLD), and Phe388. Mg(2+) is bound at residue Glu390.

This sequence belongs to the class-II aminoacyl-tRNA synthetase family. Phe-tRNA synthetase alpha subunit type 2 subfamily. In terms of assembly, tetramer of two alpha and two beta subunits. Mg(2+) is required as a cofactor.

Its subcellular location is the cytoplasm. It catalyses the reaction tRNA(Phe) + L-phenylalanine + ATP = L-phenylalanyl-tRNA(Phe) + AMP + diphosphate + H(+). The sequence is that of Phenylalanine--tRNA ligase alpha subunit from Sulfurisphaera tokodaii (strain DSM 16993 / JCM 10545 / NBRC 100140 / 7) (Sulfolobus tokodaii).